A 325-amino-acid chain; its full sequence is Phospho-N-acetylmuramoyl-pentapeptide-transferase (325 aa).

The next 9 membrane-spanning stretches (helical) occupy residues 7–27 (LFVLILSFAAAVIMSPLFIPF), 57–77 (IVIVLSIFISALAIGIAITGF), 81–101 (LLLLMVVTLGYGIVGFVDDYL), 122–142 (VIAAIFYIGLLAIGFDTFIAI), 146–166 (TFGFDLGWLYLILIVLMLLGA), 186–206 (IAFGAFAILAWSGGFIDTALF), 227–247 (VFMGDTGSLALGGAIAAIAIL), 252–272 (LMLIIVGGVFVIETLSVIIQV), and 302–322 (VVVTFWLVGMIFAIMGVYIGV).

It belongs to the glycosyltransferase 4 family. MraY subfamily. It depends on Mg(2+) as a cofactor.

It is found in the cell membrane. It catalyses the reaction UDP-N-acetyl-alpha-D-muramoyl-L-alanyl-gamma-D-glutamyl-meso-2,6-diaminopimeloyl-D-alanyl-D-alanine + di-trans,octa-cis-undecaprenyl phosphate = di-trans,octa-cis-undecaprenyl diphospho-N-acetyl-alpha-D-muramoyl-L-alanyl-D-glutamyl-meso-2,6-diaminopimeloyl-D-alanyl-D-alanine + UMP. It participates in cell wall biogenesis; peptidoglycan biosynthesis. Its function is as follows. Catalyzes the initial step of the lipid cycle reactions in the biosynthesis of the cell wall peptidoglycan: transfers peptidoglycan precursor phospho-MurNAc-pentapeptide from UDP-MurNAc-pentapeptide onto the lipid carrier undecaprenyl phosphate, yielding undecaprenyl-pyrophosphoryl-MurNAc-pentapeptide, known as lipid I. This is Phospho-N-acetylmuramoyl-pentapeptide-transferase from Shouchella clausii (strain KSM-K16) (Alkalihalobacillus clausii).